Consider the following 349-residue polypeptide: SUMO-activating enzyme subunit 1 (349 aa).

Methionine 1 bears the N-acetylmethionine mark. An N-acetylvaline; in SUMO-activating enzyme subunit 1, N-terminally processed modification is found at valine 2. Serine 15 is modified (phosphoserine). Position 201 is an N6-acetyllysine (lysine 201).

The protein belongs to the ubiquitin-activating E1 family. As to quaternary structure, heterodimer of SAE1 and UBA2/SAE2. The heterodimer corresponds to the two domains that are encoded on a single polypeptide chain in ubiquitin-activating enzyme E1. Interacts with UBE2I.

It is found in the nucleus. It participates in protein modification; protein sumoylation. In terms of biological role, the heterodimer acts as an E1 ligase for SUMO1, SUMO2, SUMO3, and probably SUMO4. It mediates ATP-dependent activation of SUMO proteins followed by formation of a thioester bond between a SUMO protein and a conserved active site cysteine residue on UBA2/SAE2. In Rattus norvegicus (Rat), this protein is SUMO-activating enzyme subunit 1 (Sae1).